The sequence spans 165 residues: MLRMRALWLALVLLILSIPAVSAQITVTRDLPDSAKVGDEITVTLALTIGSEKPAGAIIEESIPDGASYISSSPEATVSEGKLKWAFYGEQLKDMTLQYTVKVEKAGKLEFSGTVKTLLGNENIGGDSELEVSEKSAEQPKGTPGFEAFVAVAVIGSIALLRRKH.

Transmembrane regions (helical) follow at residues L7–V27 and K141–L161.

Its subcellular location is the cell membrane. This is an uncharacterized protein from Archaeoglobus fulgidus (strain ATCC 49558 / DSM 4304 / JCM 9628 / NBRC 100126 / VC-16).